The sequence spans 372 residues: MNLSEIGYRRVVVKLGTSVLTSGSKQLDKAHMVELARQMSALMKAGVEVVLCTSGAIAAGREHLGYPKLADTVANKQLLAAVGQSQLILAWSQLFSIYGLHVGQLLLTQADLHDRERYLNARDSLNALLNNGIIPIINENDAVATNEIKVGDNDNLSARAALLCHADLLILLTDQQGLFDSDPRSNPDAKLIKQVVNIDDSLRQLAGGAVSGLGTGGMATKLEAADIARRAGIEVVIASGHRRQVILNAVCKEDVGTHFTALENPLESRKQWILAGQAAKGKLVLDVGAIKAVTEKGRSLLSKGVVSVIGEFDRGTTLQLIDSDGRECARGISRYSAGDLNKIVGKHSDEIESLLGYDYGDAVVHRNDMVVL.

Residue Lys-14 coordinates ATP. Residues Ser-54, Asp-141, and Asn-153 each contribute to the substrate site. ATP contacts are provided by residues 173-174 and 215-221; these read TD and TGGMATK. Residues 280–358 form the PUA domain; that stretch reads KGKLVLDVGA…DEIESLLGYD (79 aa).

The protein belongs to the glutamate 5-kinase family.

Its subcellular location is the cytoplasm. The catalysed reaction is L-glutamate + ATP = L-glutamyl 5-phosphate + ADP. It functions in the pathway amino-acid biosynthesis; L-proline biosynthesis; L-glutamate 5-semialdehyde from L-glutamate: step 1/2. Catalyzes the transfer of a phosphate group to glutamate to form L-glutamate 5-phosphate. This Shewanella woodyi (strain ATCC 51908 / MS32) protein is Glutamate 5-kinase.